The primary structure comprises 872 residues: Leucine--tRNA ligase (872 aa).

The short motif at 42-52 (PYPSGSLHMGH) is the 'HIGH' region element. The 'KMSKS' region signature appears at 634 to 638 (TMSKS). K637 is an ATP binding site.

This sequence belongs to the class-I aminoacyl-tRNA synthetase family.

The protein localises to the cytoplasm. The enzyme catalyses tRNA(Leu) + L-leucine + ATP = L-leucyl-tRNA(Leu) + AMP + diphosphate. The sequence is that of Leucine--tRNA ligase from Nostoc sp. (strain PCC 7120 / SAG 25.82 / UTEX 2576).